Here is a 307-residue protein sequence, read N- to C-terminus: Probable GTP 3',8-cyclase (307 aa).

The Radical SAM core domain maps to 5-231 (RFGRPVTNLR…MHRRKKYFIP (227 aa)). Residue Arg-14 coordinates GTP. The [4Fe-4S] cluster site is built by Cys-21, Cys-25, and Cys-28. Lys-62 lines the GTP pocket. An S-adenosyl-L-methionine-binding site is contributed by Gly-66. Thr-91 contacts GTP. Ser-115 serves as a coordination point for S-adenosyl-L-methionine. Lys-151 is a GTP binding site. Met-190 serves as a coordination point for S-adenosyl-L-methionine. Positions 251 and 254 each coordinate [4Fe-4S] cluster. 256-258 (RLR) is a binding site for GTP. Cys-268 is a [4Fe-4S] cluster binding site.

Belongs to the radical SAM superfamily. MoaA family. [4Fe-4S] cluster is required as a cofactor.

It carries out the reaction GTP + AH2 + S-adenosyl-L-methionine = (8S)-3',8-cyclo-7,8-dihydroguanosine 5'-triphosphate + 5'-deoxyadenosine + L-methionine + A + H(+). It functions in the pathway cofactor biosynthesis; molybdopterin biosynthesis. In terms of biological role, catalyzes the cyclization of GTP to (8S)-3',8-cyclo-7,8-dihydroguanosine 5'-triphosphate. This Thermococcus kodakarensis (strain ATCC BAA-918 / JCM 12380 / KOD1) (Pyrococcus kodakaraensis (strain KOD1)) protein is Probable GTP 3',8-cyclase.